A 208-amino-acid chain; its full sequence is Large ribosomal subunit protein uL4 (208 aa).

A disordered region spans residues 51–79 (AKERAEVSFSTKKLKKQKGTGGARAGSRK).

Belongs to the universal ribosomal protein uL4 family. Part of the 50S ribosomal subunit.

In terms of biological role, one of the primary rRNA binding proteins, this protein initially binds near the 5'-end of the 23S rRNA. It is important during the early stages of 50S assembly. It makes multiple contacts with different domains of the 23S rRNA in the assembled 50S subunit and ribosome. Forms part of the polypeptide exit tunnel. This is Large ribosomal subunit protein uL4 from Cytophaga hutchinsonii (strain ATCC 33406 / DSM 1761 / CIP 103989 / NBRC 15051 / NCIMB 9469 / D465).